The chain runs to 34 residues: Tryptophanase operon leader peptide (34 aa).

The sequence is that of Tryptophanase operon leader peptide (tnaL) from Proteus vulgaris.